We begin with the raw amino-acid sequence, 341 residues long: S-adenosylmethionine:tRNA ribosyltransferase-isomerase (341 aa).

Belongs to the QueA family. In terms of assembly, monomer.

The protein localises to the cytoplasm. The catalysed reaction is 7-aminomethyl-7-carbaguanosine(34) in tRNA + S-adenosyl-L-methionine = epoxyqueuosine(34) in tRNA + adenine + L-methionine + 2 H(+). Its pathway is tRNA modification; tRNA-queuosine biosynthesis. In terms of biological role, transfers and isomerizes the ribose moiety from AdoMet to the 7-aminomethyl group of 7-deazaguanine (preQ1-tRNA) to give epoxyqueuosine (oQ-tRNA). This Clostridium perfringens (strain ATCC 13124 / DSM 756 / JCM 1290 / NCIMB 6125 / NCTC 8237 / Type A) protein is S-adenosylmethionine:tRNA ribosyltransferase-isomerase.